A 153-amino-acid chain; its full sequence is Transcriptional repressor NrdR (153 aa).

A zinc finger lies at 3-34 (CPYCGHPDTRVVDSRPSDEGMAIRRRRECPSC). Positions 49–136 (LMVVKRDGRK…VYREFDSVER (88 aa)) constitute an ATP-cone domain.

Belongs to the NrdR family. Zn(2+) is required as a cofactor.

In terms of biological role, negatively regulates transcription of bacterial ribonucleotide reductase nrd genes and operons by binding to NrdR-boxes. The sequence is that of Transcriptional repressor NrdR from Thermus thermophilus (strain ATCC BAA-163 / DSM 7039 / HB27).